The chain runs to 426 residues: Histidine--tRNA ligase (426 aa).

It belongs to the class-II aminoacyl-tRNA synthetase family. As to quaternary structure, homodimer.

The protein resides in the cytoplasm. It catalyses the reaction tRNA(His) + L-histidine + ATP = L-histidyl-tRNA(His) + AMP + diphosphate + H(+). The sequence is that of Histidine--tRNA ligase from Shewanella baltica (strain OS195).